We begin with the raw amino-acid sequence, 130 residues long: Ornithine decarboxylase antizyme (130 aa).

Basic and acidic residues predominate over residues 1–14 (SDVPVHHRTDHDRA). Residues 1 to 56 (SDVPVHHRTDHDRASLLTGSSRKSSVDSAGGSLFEASSRASSPSSSSSSECSDTES) are disordered. The segment covering 17-27 (LTGSSRKSSVD) has biased composition (polar residues). The segment covering 32–51 (SLFEASSRASSPSSSSSSEC) has biased composition (low complexity).

This sequence belongs to the ODC antizyme family. In terms of assembly, interacts with ODC1 and thereby sterically blocks ODC homodimerization.

Its function is as follows. Ornithine decarboxylase (ODC) antizyme protein that negatively regulates ODC activity and intracellular polyamine biosynthesis and uptake in response to increased intracellular polyamine levels. Binds to ODC monomers, inhibiting the assembly of the functional ODC homodimer, and targets the monomers for ubiquitin-independent proteolytic destruction by the 26S proteasome. This is Ornithine decarboxylase antizyme (Oda) from Drosophila virilis (Fruit fly).